Consider the following 874-residue polypeptide: Alanine--tRNA ligase (874 aa).

H562, H566, C665, and H669 together coordinate Zn(2+).

The protein belongs to the class-II aminoacyl-tRNA synthetase family. It depends on Zn(2+) as a cofactor.

It is found in the cytoplasm. It catalyses the reaction tRNA(Ala) + L-alanine + ATP = L-alanyl-tRNA(Ala) + AMP + diphosphate. Catalyzes the attachment of alanine to tRNA(Ala) in a two-step reaction: alanine is first activated by ATP to form Ala-AMP and then transferred to the acceptor end of tRNA(Ala). Also edits incorrectly charged Ser-tRNA(Ala) and Gly-tRNA(Ala) via its editing domain. This chain is Alanine--tRNA ligase, found in Pseudomonas paraeruginosa (strain DSM 24068 / PA7) (Pseudomonas aeruginosa (strain PA7)).